A 446-amino-acid polypeptide reads, in one-letter code: Baeyer-Villiger monooxygenase dmxR6 (446 aa).

The protein belongs to the AflY oxidoreductase family.

Its pathway is secondary metabolite biosynthesis. Functionally, baeyer-Villiger monooxygenase; part of the gene cluster that mediates the biosynthesis of the dimeric xanthones cryptosporioptides. The pathway begins with the synthesis of atrochrysone thioester by the polyketide synthase dmx-nrPKS. The atrochrysone carboxyl ACP thioesterase dmxR1 then breaks the thioester bond and releases the atrochrysone carboxylic acid from dmx-nrPKS. Atrochrysone carboxylic acid is decarboxylated by the decarboxylase dmxR15, and oxidized by the anthrone oxygenase dmxR16 to yield emodin. Emodin is then reduced to emodin hydroquinone by the oxidoreductase dmxR7. A-ring reduction by the short chain dehydrogenase dmxR18, dehydration by the scytalone dehydratase-like protein dmxR17 and probable spontaneous re-oxidation, results in overall deoxygenation to chrysophanol. Baeyer-Villiger oxidation by the Baeyer-Villiger monooxygenase (BVMO) dmxR6 then yields monodictylactone in equilibrium with monodictyphenone. In the case of the cryptosporioptides biosynthesis, monodictylactone is reduced at C-12 to an alcohol (by the short chain dehydrogenases dmxR12 or dmxR8) and hydroxylated at C-5 by dmxR9, yielding the electron-rich aromatic which could eliminate H(2)O to form the ortho-quinonemethide, followed by tautomerisation to paraquinone and complete the formal reduction to produce the 10-methylgroup. Conjugate addition of C-4a-OH to the resulting paraquinone by the monooxygenase dmxR10 then gives cyclohexadienone, which is then reduced at C-5 by the short chain dehydrogenase dmxR3 to give the dihydroxanthone. The 6,7-epoxide in the cryptosporioptides could be introduced by the cytochrome P450 monooxygenase dmxL3. The highly reducing PKS dmxL2 manufactures butyrate, which is further carboxylated by dmxL1 to form ethylmalonate. It is not yet clear whether the carboxylation occurs while the butyrate is attached to the ACP of dmxL2, but this unusual fungal metabolite could then be esterified to O-5 by the O-acetyltransferase dmxR13. Finally, dimerization performed by dmxR5 gives the observed dimers cryptosporioptides A, B and C as the final products of the pathway. The polypeptide is Baeyer-Villiger monooxygenase dmxR6 (Cryptosporiopsis sp. (strain 8999)).